The chain runs to 318 residues: Methionyl-tRNA formyltransferase (318 aa).

111-114 (SLLP) serves as a coordination point for (6S)-5,6,7,8-tetrahydrofolate.

The protein belongs to the Fmt family.

It carries out the reaction L-methionyl-tRNA(fMet) + (6R)-10-formyltetrahydrofolate = N-formyl-L-methionyl-tRNA(fMet) + (6S)-5,6,7,8-tetrahydrofolate + H(+). In terms of biological role, attaches a formyl group to the free amino group of methionyl-tRNA(fMet). The formyl group appears to play a dual role in the initiator identity of N-formylmethionyl-tRNA by promoting its recognition by IF2 and preventing the misappropriation of this tRNA by the elongation apparatus. This chain is Methionyl-tRNA formyltransferase, found in Chlorobium limicola (strain DSM 245 / NBRC 103803 / 6330).